A 294-amino-acid chain; its full sequence is Tissue factor (294 aa).

A signal peptide spans 1-28; that stretch reads MAILVRPRLLAALAPTFLGCLLLQVIAG. At 29-251 the chain is on the extracellular side; that stretch reads AGIPEKAFNL…TEQWKSFLGE (223 aa). N-linked (GlcNAc...) asparagine glycans are attached at residues Asn-37 and Asn-57. An intrachain disulfide couples Cys-75 to Cys-83. Residues Asn-169 and Asn-200 are each glycosylated (N-linked (GlcNAc...) asparagine). The cysteines at positions 218 and 241 are disulfide-linked. The WKS motif motif lies at 245–247; it reads WKS. Residues 252-274 traverse the membrane as a helical segment; the sequence is TLIIVGAVVLLATIFIILLSISL. Cys-275 carries S-palmitoyl cysteine lipidation. The Cytoplasmic segment spans residues 275-294; the sequence is CKRRKNRAGQKGKNTPSRLA.

The protein belongs to the tissue factor family. In terms of assembly, interacts with HSPE; the interaction, inhibited by heparin, promotes the generation of activated factor X and activates coagulation in the presence of activated factor VII.

The protein localises to the membrane. Its function is as follows. Initiates blood coagulation by forming a complex with circulating factor VII or VIIa. The [TF:VIIa] complex activates factors IX or X by specific limited proteolysis. TF plays a role in normal hemostasis by initiating the cell-surface assembly and propagation of the coagulation protease cascade. The protein is Tissue factor (F3) of Mus musculus (Mouse).